The chain runs to 1964 residues: Neurogenic locus notch homolog protein 4 (1964 aa).

An N-terminal signal peptide occupies residues 1–20 (MQPQLLLLLLLPLNFPVILT). 4 consecutive EGF-like domains span residues 21–60 (RELLCGGSPEPCANGGTCLRLSRGQGICQCAPGFLGETCQ), 61–112 (FPDP…DRCQ), 115–152 (LEELCPPSFCSNGGHCYVQASGRPQCSCEPGWTGEQCQ), and 153–189 (LRDFCSANPCANGGVCLATYPQIQCRCPPGFEGHTCE). Topologically, residues 21–1443 (RELLCGGSPE…TRPSANQLPW (1423 aa)) are extracellular. Cystine bridges form between Cys25–Cys38, Cys32–Cys48, Cys50–Cys59, Cys65–Cys77, Cys71–Cys100, Cys102–Cys111, Cys119–Cys130, Cys124–Cys140, Cys142–Cys151, Cys157–Cys168, Cys162–Cys177, Cys179–Cys188, Cys195–Cys208, Cys202–Cys217, Cys219–Cys228, Cys235–Cys246, Cys240–Cys259, Cys261–Cys270, Cys277–Cys288, Cys282–Cys297, Cys299–Cys308, Cys315–Cys329, Cys323–Cys338, Cys340–Cys349, Cys356–Cys367, Cys361–Cys376, Cys378–Cys387, Cys393–Cys404, Cys398–Cys415, Cys417–Cys426, Cys433–Cys449, Cys443–Cys458, Cys460–Cys469, Cys476–Cys487, Cys481–Cys496, Cys498–Cys507, Cys514–Cys525, Cys519–Cys534, Cys536–Cys545, Cys552–Cys563, Cys557–Cys572, Cys574–Cys583, Cys590–Cys601, Cys595–Cys610, Cys612–Cys621, Cys626–Cys637, Cys631–Cys646, Cys648–Cys655, Cys662–Cys669, Cys664–Cys674, Cys676–Cys685, Cys692–Cys703, Cys697–Cys712, Cys714–Cys723, Cys730–Cys741, Cys735–Cys750, Cys752–Cys761, Cys768–Cys779, Cys773–Cys788, Cys790–Cys799, Cys807–Cys818, Cys812–Cys827, Cys829–Cys838, Cys845–Cys856, Cys850–Cys865, Cys867–Cys876, Cys882–Cys903, Cys897–Cys912, Cys914–Cys923, Cys930–Cys941, Cys935–Cys950, Cys952–Cys961, Cys968–Cys979, Cys973–Cys988, Cys990–Cys999, Cys1006–Cys1019, Cys1011–Cys1028, Cys1030–Cys1039, Cys1046–Cys1057, Cys1051–Cys1069, Cys1071–Cys1080, Cys1087–Cys1098, Cys1092–Cys1110, Cys1112–Cys1121, Cys1130–Cys1142, Cys1136–Cys1155, Cys1157–Cys1166, Cys1174–Cys1187, Cys1183–Cys1199, Cys1210–Cys1234, Cys1216–Cys1229, Cys1225–Cys1241, Cys1247–Cys1273, Cys1255–Cys1268, and Cys1264–Cys1280. Positions 191–229 (DINECFLEPGPCPQGTSCHNTLGSYQCLCPVGQEGPQCK) constitute an EGF-like 5; calcium-binding domain. The EGF-like 6 domain maps to 231–271 (RKGACPPGSCLNGGTCQLVPEGHSTFHLCLCPPGFTGLDCE). The EGF-like 7; calcium-binding domain maps to 273–309 (NPDDCVRHQCQNGATCLDGLDTYTCLCPKTWKGWDCS). Positions 311 to 350 (DIDECEARGPPRCRNGGTCQNTAGSFHCVCVSGWGGAGCE) constitute an EGF-like 8; calcium-binding domain. An EGF-like 9; calcium-binding domain is found at 352-388 (NLDDCAAATCAPGSTCIDRVGSFSCLCPPGRTGLLCH). An EGF-like 10 domain is found at 389–427 (LEDMCLSQPCHVNAQCSTNPLTGSTLCICQPGYSGSTCH). The 42-residue stretch at 429 to 470 (DLDECQMAQQGPSPCEHGGSCINTPGSFNCLCLPGYTGSRCE) folds into the EGF-like 11; calcium-binding domain. The EGF-like 12; calcium-binding domain occupies 472-508 (DHNECLSQPCHPGSTCLDLLATFHCLCPPGLEGRLCE). The EGF-like 13; calcium-binding domain maps to 510–546 (EVNECTSNPCLNQAACHDLLNGFQCLCLPGFTGARCE). The 37-residue stretch at 548–584 (DMDECSSTPCANGGRCRDQPGAFYCECLPGFEGPHCE) folds into the EGF-like 14; calcium-binding domain. The 37-residue stretch at 586 to 622 (EVDECLSDPCPVGASCLDLPGAFFCLCRPGFTGQLCE) folds into the EGF-like 15; calcium-binding domain. EGF-like domains lie at 623 to 656 (VPLCTPNMCQPGQQCQGQEHRAPCLCPDGSPGCV), 658 to 686 (AEDNCPCHHGHCQRSLCVCDEGWTGPECE), 688 to 724 (ELGGCISTPCAHGGTCHPQPSGYNCTCPAGYMGLTCS), 726 to 762 (EVTACHSGPCLNGGSCSIRPEGYSCTCLPSHTGRHCQ), 764 to 800 (AVDHCVSASCLNGGTCVNKPGTFFCLCATGFQGLHCE), 803 to 839 (TNPSCADSPCRNKATCQDTPRGARCLCSPGYTGSSCQ), 841 to 877 (LIDLCARKPCPHTARCLQSGPSFQCLCLQGWTGALCD), 878 to 924 (FPLS…KLCQ), 926 to 962 (NVNPCEPNPCHHGSTCVPQPSGYVCQCAPGYEGQNCS), 964 to 1000 (VLDACQSQPCHNHGTCTSRPGGFHCACPPGFVGLRCE), 1002 to 1040 (DVDECLDRPCHPSGTAACHSLANAFYCQCLPGHTGQRCE), 1042 to 1081 (EMDLCQSQPCSNGGSCEITTGPPPGFTCHCPKGFEGPTCS), 1083 to 1122 (KALSCGIHHCHNGGLCLPSPKPGSPPLCACLSGFGGPDCL), and 1126 to 1167 (APPG…PRCQ). Asn711 carries N-linked (GlcNAc...) asparagine glycosylation. A glycan (N-linked (GlcNAc...) asparagine) is linked at Asn960. N-linked (GlcNAc...) asparagine glycosylation occurs at Asn1139. LNR repeat units follow at residues 1166 to 1209 (CQRP…PWKG), 1210 to 1241 (CPPHSQCWLLFRDGRCHPQCDSEECLFDGYDC), and 1247 to 1287 (CIPA…GEDS). Residues 1345 to 1369 (EELSGARDSSSWERQAPPTQPLGKE) form a disordered region. Residues 1444-1464 (PILCSPVVGVLLLALGALLVL) traverse the membrane as a helical segment. At 1465-1964 (QLIRRRRREH…PLNSVVRNLN (500 aa)) the chain is on the cytoplasmic side. The tract at residues 1516–1535 (VDEDGVAMCSGPEEGEAEET) is disordered. 5 ANK repeats span residues 1628–1657 (TGETPLHLAARFSRPTAARRLLEAGANPNQ), 1661–1691 (AGRTPLHTAVAADAREVCQLLLASRQTTVDA), 1695–1724 (DGTTPLMLAARLAVEDLVEELIAARADVGA), 1728–1757 (RGKTALHWAAAVNNARAARSLLQAGADKDA), and 1761–1790 (REQTPLFLAAREGAVEVAQLLLELGAARGL). The segment at 1879 to 1907 (RSGSCGGPTTRGRRFSAGSRGRRGARASQ) is disordered.

This sequence belongs to the NOTCH family. As to quaternary structure, heterodimer of a C-terminal fragment N(TM) and a N-terminal fragment N(EC) which are probably linked by disulfide bonds. Interacts with MAML1, MAML2 and MAML3 which act as transcriptional coactivators for NOTCH4. In terms of processing, synthesized in the endoplasmic reticulum as an inactive form which is proteolytically cleaved by a furin-like convertase in the trans-Golgi network before it reaches the plasma membrane to yield an active, ligand-accessible form. Cleavage results in a C-terminal fragment N(TM) and a N-terminal fragment N(EC). Following ligand binding, it is cleaved by TNF-alpha converting enzyme (TACE) to yield a membrane-associated intermediate fragment called notch extracellular truncation (NEXT). This fragment is then cleaved by presenilin dependent gamma-secretase to release a notch-derived peptide containing the intracellular domain (NICD) from the membrane. Phosphorylated. As to expression, highly expressed in lung, moderately in heart kidney, and at lower levels in the ovary and skeletal muscle. A very low expression is seen in the brain, intestine, liver and testis.

It is found in the cell membrane. It localises to the nucleus. Functionally, functions as a receptor for membrane-bound ligands Jagged1, Jagged2 and Delta1 to regulate cell-fate determination. Upon ligand activation through the released notch intracellular domain (NICD) it forms a transcriptional activator complex with RBPJ/RBPSUH and activates genes of the enhancer of split locus. Affects the implementation of differentiation, proliferation and apoptotic programs. May regulate branching morphogenesis in the developing vascular system. The polypeptide is Neurogenic locus notch homolog protein 4 (Mus musculus (Mouse)).